The sequence spans 625 residues: Mesothelin (625 aa).

A signal peptide spans Met1–Leu35. A glycan (N-linked (GlcNAc...) asparagine) is linked at Asn93. Ser202 carries the phosphoserine modification. A disulfide bridge connects residues Cys304 and Cys328. Asn390, Asn488, and Asn517 each carry an N-linked (GlcNAc...) asparagine glycan. Ser600 is lipidated: GPI-anchor amidated serine. Positions Ser601 to Ser625 are cleaved as a propeptide — removed in mature form.

This sequence belongs to the mesothelin family. As to quaternary structure, interacts with MUC16. In terms of processing, proteolytically cleaved by a furin-like convertase to generate megakaryocyte-potentiating factor (MPF), and the cleaved form of mesothelin. Highly expressed in lung and heart. Expressed at low levels in spleen, liver, kidney and testis. Present in lung (at protein level).

Its subcellular location is the cell membrane. The protein resides in the golgi apparatus. It is found in the secreted. In terms of biological role, membrane-anchored forms may play a role in cellular adhesion. Functionally, megakaryocyte-potentiating factor (MPF) may potentiate megakaryocyte colony formation. The chain is Mesothelin (Msln) from Mus musculus (Mouse).